The primary structure comprises 98 residues: Small ribosomal subunit protein uS19 (98 aa).

This sequence belongs to the universal ribosomal protein uS19 family.

In terms of biological role, protein S19 forms a complex with S13 that binds strongly to the 16S ribosomal RNA. This is Small ribosomal subunit protein uS19 from Chlorobaculum tepidum (strain ATCC 49652 / DSM 12025 / NBRC 103806 / TLS) (Chlorobium tepidum).